The following is an 87-amino-acid chain: Small ribosomal subunit protein bS20 (87 aa).

Belongs to the bacterial ribosomal protein bS20 family.

In terms of biological role, binds directly to 16S ribosomal RNA. The chain is Small ribosomal subunit protein bS20 from Roseobacter denitrificans (strain ATCC 33942 / OCh 114) (Erythrobacter sp. (strain OCh 114)).